Here is a 369-residue protein sequence, read N- to C-terminus: Glutamate 5-kinase (369 aa).

Position 10 (K10) interacts with ATP. Substrate-binding residues include S50, D137, and N149. Residues 169-170 (TD) and 210-216 (TGGMVTK) contribute to the ATP site. Residues 276-349 (EGSIFIDEGA…GKHSEEMLAT (74 aa)) form the PUA domain.

Belongs to the glutamate 5-kinase family.

The protein localises to the cytoplasm. The catalysed reaction is L-glutamate + ATP = L-glutamyl 5-phosphate + ADP. It functions in the pathway amino-acid biosynthesis; L-proline biosynthesis; L-glutamate 5-semialdehyde from L-glutamate: step 1/2. Functionally, catalyzes the transfer of a phosphate group to glutamate to form L-glutamate 5-phosphate. In Desulfitobacterium hafniense (strain Y51), this protein is Glutamate 5-kinase.